Reading from the N-terminus, the 268-residue chain is Tryptophan synthase alpha chain (268 aa).

Catalysis depends on proton acceptor residues Glu-49 and Asp-60.

This sequence belongs to the TrpA family. As to quaternary structure, tetramer of two alpha and two beta chains.

It carries out the reaction (1S,2R)-1-C-(indol-3-yl)glycerol 3-phosphate + L-serine = D-glyceraldehyde 3-phosphate + L-tryptophan + H2O. It participates in amino-acid biosynthesis; L-tryptophan biosynthesis; L-tryptophan from chorismate: step 5/5. Functionally, the alpha subunit is responsible for the aldol cleavage of indoleglycerol phosphate to indole and glyceraldehyde 3-phosphate. This Aeromonas salmonicida (strain A449) protein is Tryptophan synthase alpha chain.